We begin with the raw amino-acid sequence, 172 residues long: Large ribosomal subunit protein uL10 (172 aa).

Belongs to the universal ribosomal protein uL10 family. As to quaternary structure, part of the ribosomal stalk of the 50S ribosomal subunit. The N-terminus interacts with L11 and the large rRNA to form the base of the stalk. The C-terminus forms an elongated spine to which L12 dimers bind in a sequential fashion forming a multimeric L10(L12)X complex.

Functionally, forms part of the ribosomal stalk, playing a central role in the interaction of the ribosome with GTP-bound translation factors. The protein is Large ribosomal subunit protein uL10 of Acidothermus cellulolyticus (strain ATCC 43068 / DSM 8971 / 11B).